The following is a 667-amino-acid chain: Coiled-coil domain-containing protein 154 (667 aa).

Coiled-coil stretches lie at residues 76–182 (VVEL…QEAG), 215–302 (RRVD…GQHE), 384–410 (LLRE…SGHL), and 457–521 (LRGV…KEDN).

The protein resides in the early endosome. The chain is Coiled-coil domain-containing protein 154 from Homo sapiens (Human).